Reading from the N-terminus, the 629-residue chain is Dihydroxy-acid dehydratase 2 (629 aa).

Position 82 (aspartate 82) interacts with Mg(2+). Cysteine 123 is a binding site for [2Fe-2S] cluster. Residues aspartate 124 and lysine 125 each coordinate Mg(2+). Lysine 125 is modified (N6-carboxylysine). Residue cysteine 197 participates in [2Fe-2S] cluster binding. Glutamate 493 lines the Mg(2+) pocket. The active-site Proton acceptor is the serine 519. The tract at residues aspartate 603–glycine 629 is disordered.

This sequence belongs to the IlvD/Edd family. In terms of assembly, homodimer. It depends on [2Fe-2S] cluster as a cofactor. Requires Mg(2+) as cofactor.

The catalysed reaction is (2R)-2,3-dihydroxy-3-methylbutanoate = 3-methyl-2-oxobutanoate + H2O. The enzyme catalyses (2R,3R)-2,3-dihydroxy-3-methylpentanoate = (S)-3-methyl-2-oxopentanoate + H2O. It participates in amino-acid biosynthesis; L-isoleucine biosynthesis; L-isoleucine from 2-oxobutanoate: step 3/4. The protein operates within amino-acid biosynthesis; L-valine biosynthesis; L-valine from pyruvate: step 3/4. Its function is as follows. Functions in the biosynthesis of branched-chain amino acids. Catalyzes the dehydration of (2R,3R)-2,3-dihydroxy-3-methylpentanoate (2,3-dihydroxy-3-methylvalerate) into 2-oxo-3-methylpentanoate (2-oxo-3-methylvalerate) and of (2R)-2,3-dihydroxy-3-methylbutanoate (2,3-dihydroxyisovalerate) into 2-oxo-3-methylbutanoate (2-oxoisovalerate), the penultimate precursor to L-isoleucine and L-valine, respectively. This chain is Dihydroxy-acid dehydratase 2, found in Nocardia farcinica (strain IFM 10152).